The chain runs to 66 residues: UPF0337 protein SAG0619 (66 aa).

A disordered region spans residues 1–22 (MSQEKLKSKLDQAKGGAKEGFG).

The protein belongs to the UPF0337 (CsbD) family.

The chain is UPF0337 protein SAG0619 from Streptococcus agalactiae serotype V (strain ATCC BAA-611 / 2603 V/R).